The following is a 105-amino-acid chain: Large ribosomal subunit protein eL42 (105 aa).

The interval K23–Q52 is disordered. Positions K29–Q46 are enriched in basic and acidic residues.

This sequence belongs to the eukaryotic ribosomal protein eL42 family.

The sequence is that of Large ribosomal subunit protein eL42 (rpl-44) from Brugia malayi (Filarial nematode worm).